The following is a 191-amino-acid chain: MRKASVSRKTKETDIKLEFNLDGTGNSDINTSVGFLDHMFELLAFHGNFDIKLKAKGDIHVDYHHLIEDLGIVLGKAIDKTLLDRNGIKRYGFASIPMDEALAQVSIDIGGREFLIYNVKFDGYIKDIDISLFEEFFRAVSNHGKIALHINVLYGKDLHHIIEAVFKAFAKALSDASRIYGQQLPSTKGVI.

It belongs to the imidazoleglycerol-phosphate dehydratase family.

The protein localises to the cytoplasm. The catalysed reaction is D-erythro-1-(imidazol-4-yl)glycerol 3-phosphate = 3-(imidazol-4-yl)-2-oxopropyl phosphate + H2O. It participates in amino-acid biosynthesis; L-histidine biosynthesis; L-histidine from 5-phospho-alpha-D-ribose 1-diphosphate: step 6/9. The chain is Imidazoleglycerol-phosphate dehydratase from Thermodesulfovibrio yellowstonii (strain ATCC 51303 / DSM 11347 / YP87).